The chain runs to 285 residues: ATP synthase gamma chain (285 aa).

It belongs to the ATPase gamma chain family. As to quaternary structure, F-type ATPases have 2 components, CF(1) - the catalytic core - and CF(0) - the membrane proton channel. CF(1) has five subunits: alpha(3), beta(3), gamma(1), delta(1), epsilon(1). CF(0) has three main subunits: a, b and c.

It localises to the cell membrane. Functionally, produces ATP from ADP in the presence of a proton gradient across the membrane. The gamma chain is believed to be important in regulating ATPase activity and the flow of protons through the CF(0) complex. In Geobacillus sp. (strain WCH70), this protein is ATP synthase gamma chain.